A 165-amino-acid polypeptide reads, in one-letter code: uncharacterized protein (165 aa).

Residues 10 to 27 (VSLTIVFVLFFSADVSLT) traverse the membrane as a helical segment.

It localises to the membrane. This is an uncharacterized protein from Saccharomyces cerevisiae (strain ATCC 204508 / S288c) (Baker's yeast).